Reading from the N-terminus, the 197-residue chain is LexA repressor (197 aa).

The segment at residues V28–I47 is a DNA-binding region (H-T-H motif). Residues S119 and K156 each act as for autocatalytic cleavage activity in the active site.

It belongs to the peptidase S24 family. Homodimer.

The enzyme catalyses Hydrolysis of Ala-|-Gly bond in repressor LexA.. Functionally, represses a number of genes involved in the response to DNA damage (SOS response), including recA and lexA. In the presence of single-stranded DNA, RecA interacts with LexA causing an autocatalytic cleavage which disrupts the DNA-binding part of LexA, leading to derepression of the SOS regulon and eventually DNA repair. The protein is LexA repressor of Thermotoga sp. (strain RQ2).